Reading from the N-terminus, the 132-residue chain is Replication enhancer protein (132 aa).

Belongs to the geminiviridae replication enhancer protein family. As to quaternary structure, homooligomer. Interacts with the replication-associated protein (REP). Interacts with host proliferating cell nuclear antigen (PCNA). Interacts with host retinoblastoma-related protein 1 (RBR1), and may thereby deregulate the host cell cycle. Oligomerization and interaction with PCNA are necessary for optimal replication enhancement.

Increases viral DNA accumulation. Enhances infectivity and symptom expression. The polypeptide is Replication enhancer protein (Macroptilium lathyroides (Lima bean)).